The sequence spans 293 residues: Phosphoribosylaminoimidazole-succinocarboxamide synthase (293 aa).

This sequence belongs to the SAICAR synthetase family.

It catalyses the reaction 5-amino-1-(5-phospho-D-ribosyl)imidazole-4-carboxylate + L-aspartate + ATP = (2S)-2-[5-amino-1-(5-phospho-beta-D-ribosyl)imidazole-4-carboxamido]succinate + ADP + phosphate + 2 H(+). It functions in the pathway purine metabolism; IMP biosynthesis via de novo pathway; 5-amino-1-(5-phospho-D-ribosyl)imidazole-4-carboxamide from 5-amino-1-(5-phospho-D-ribosyl)imidazole-4-carboxylate: step 1/2. In Desulfosudis oleivorans (strain DSM 6200 / JCM 39069 / Hxd3) (Desulfococcus oleovorans), this protein is Phosphoribosylaminoimidazole-succinocarboxamide synthase.